The primary structure comprises 385 residues: Succinate--CoA ligase [ADP-forming] subunit beta (385 aa).

The ATP-grasp domain maps to 9–244 (KEVLRKYGVS…LDEEDPKEIE (236 aa)). ATP-binding positions include K46, 53–55 (GRG), E99, C102, and E107. Mg(2+) is bound by residues N199 and D213. Substrate-binding positions include N264 and 321–323 (GIM).

The protein belongs to the succinate/malate CoA ligase beta subunit family. Heterotetramer of two alpha and two beta subunits. Requires Mg(2+) as cofactor.

The catalysed reaction is succinate + ATP + CoA = succinyl-CoA + ADP + phosphate. The enzyme catalyses GTP + succinate + CoA = succinyl-CoA + GDP + phosphate. Its pathway is carbohydrate metabolism; tricarboxylic acid cycle; succinate from succinyl-CoA (ligase route): step 1/1. In terms of biological role, succinyl-CoA synthetase functions in the citric acid cycle (TCA), coupling the hydrolysis of succinyl-CoA to the synthesis of either ATP or GTP and thus represents the only step of substrate-level phosphorylation in the TCA. The beta subunit provides nucleotide specificity of the enzyme and binds the substrate succinate, while the binding sites for coenzyme A and phosphate are found in the alpha subunit. In Bacillus velezensis (strain DSM 23117 / BGSC 10A6 / LMG 26770 / FZB42) (Bacillus amyloliquefaciens subsp. plantarum), this protein is Succinate--CoA ligase [ADP-forming] subunit beta.